An 80-amino-acid chain; its full sequence is Cell division topological specificity factor (80 aa).

This sequence belongs to the MinE family.

Functionally, prevents the cell division inhibition by proteins MinC and MinD at internal division sites while permitting inhibition at polar sites. This ensures cell division at the proper site by restricting the formation of a division septum at the midpoint of the long axis of the cell. The sequence is that of Cell division topological specificity factor from Wolinella succinogenes (strain ATCC 29543 / DSM 1740 / CCUG 13145 / JCM 31913 / LMG 7466 / NCTC 11488 / FDC 602W) (Vibrio succinogenes).